Consider the following 379-residue polypeptide: Probable 3-phenylpropionic acid transporter (379 aa).

The Cytoplasmic portion of the chain corresponds to 1–4 (MVLQ). A helical transmembrane segment spans residues 5 to 31 (STRWLALGYFTYFFSYGIFLPFWSVWL). Topologically, residues 32 to 37 (KGIGLT) are periplasmic. Residues 38 to 66 (PETIGLLLGAGLVARFLGSLLIAPRVSDP) traverse the membrane as a helical segment. At 67 to 70 (SRLI) the chain is on the cytoplasmic side. A helical membrane pass occupies residues 71 to 96 (SALRVLALLTLLFAVAFWAGAHVAWL). Topologically, residues 97 to 100 (MLVM) are periplasmic. Residues 101 to 118 (IGFNLFFSPLVPLTDALA) traverse the membrane as a helical segment. The Cytoplasmic portion of the chain corresponds to 119-129 (NTWQKQFPLDY). The chain crosses the membrane as a helical span at residues 130–152 (GKVRLWGSVAFVIGSALTGKLVT). The Periplasmic portion of the chain corresponds to 153 to 155 (MFD). A helical transmembrane segment spans residues 156 to 175 (YRVILALLTLGVASMLLGFL). Topologically, residues 176–207 (IRPTIQPQGASRQQESTGWSAWLALVRQNWRF) are cytoplasmic. A helical membrane pass occupies residues 208-227 (LACVCLLQGAHAAYYGFSAI). Residues 228-231 (YWQA) are Periplasmic-facing. Residues 232-256 (AGYSASAVGYLWSLGVVAEVIIFAL) form a helical membrane-spanning segment. Residues 257–266 (SNKLFRRCSA) are Cytoplasmic-facing. Residues 267-286 (RDMLLISAICGVVRWGIMGA) traverse the membrane as a helical segment. At 287-289 (TTA) the chain is on the periplasmic side. The helical transmembrane segment at 290–312 (LPWLIVVQILHCGTFTVCHLAAM) threads the bilayer. Topologically, residues 313–323 (RYIAARQGSEV) are cytoplasmic. The helical transmembrane segment at 324–351 (IRLQAVYSAVAMGGSIAIMTVFAGFLYQ) threads the bilayer. At 352 to 354 (YLG) the chain is on the periplasmic side. A helical transmembrane segment spans residues 355–375 (HGVFWVMALVALPAMFLRPKV). Residues 376-379 (VPSC) are Cytoplasmic-facing.

This sequence belongs to the major facilitator superfamily. Phenyl propionate permease (PPP) (TC 2.A.1.27) family.

It is found in the cell inner membrane. Its function is as follows. Probable permease involved in the uptake of 3-phenylpropionic acid. The sequence is that of Probable 3-phenylpropionic acid transporter (hcaT) from Escherichia coli (strain K12).